A 291-amino-acid chain; its full sequence is Beta-lactamase CTX-M-97 (291 aa).

Positions 1–28 (MMTQSIGRSMLTVMATLPLLFSSATLHA) are cleaved as a signal peptide. Catalysis depends on serine 73, which acts as the Acyl-ester intermediate. Substrate is bound at residue 237-239 (KTG).

The protein belongs to the class-A beta-lactamase family.

The catalysed reaction is a beta-lactam + H2O = a substituted beta-amino acid. Its function is as follows. Is probably capable of hydrolyzing cephalosporins such as ceftriaxone and ceftazidime, thus conferring resistance to these antibiotics. The sequence is that of Beta-lactamase CTX-M-97 (bla) from Escherichia coli.